A 441-amino-acid polypeptide reads, in one-letter code: MTESESASGMDGVVLGGTASGVGKTVATLAVARALADAGHDVQPAKAGPDFIDPSHHEPVVGTPSRSLDPWLSGTDGMRRTYHQGDGDVCVVEGMMGLYDGSVASTARVASELDLPVVLVVDASAGMQSVAATALGFQAYAAEASVDVDVAGVLAQRAHGGRHADGIRDALPDSLTYFGRVPPRDDLDVPDRHLGLHMGSEAAIDDDAVDAAAAHVAAKRIADVARTPPRPPAHDPAPDTGQTVAVADDAAFCFAYPATRERLRERADVVTFSPVAGDDLPACDGVYLPGGYPELHTDALADAPALDTLGARAADGLPVLGECGGLMALAESLTTTDGDTAEMAGVLPADVRMQDRYQALDHVELRATGDTLTAGSGATLRGHEFHYSAATVASDARFAFAVERGDGIDGDHDGLTEYRTLGTYAHVHPESTAFDAFLDAL.

In terms of domain architecture, GATase cobBQ-type spans 243 to 434; it reads TVAVADDAAF…AHVHPESTAF (192 aa). Residue cysteine 323 is the Nucleophile of the active site.

This sequence belongs to the CobB/CbiA family. Mg(2+) serves as cofactor.

The catalysed reaction is cob(II)yrinate + 2 L-glutamine + 2 ATP + 2 H2O = cob(II)yrinate a,c diamide + 2 L-glutamate + 2 ADP + 2 phosphate + 2 H(+). It functions in the pathway cofactor biosynthesis; adenosylcobalamin biosynthesis; cob(II)yrinate a,c-diamide from sirohydrochlorin (anaerobic route): step 10/10. Its function is as follows. Catalyzes the ATP-dependent amidation of the two carboxylate groups at positions a and c of cobyrinate, using either L-glutamine or ammonia as the nitrogen source. This chain is Cobyrinate a,c-diamide synthase, found in Halobacterium salinarum (strain ATCC 700922 / JCM 11081 / NRC-1) (Halobacterium halobium).